The chain runs to 171 residues: 6,7-dimethyl-8-ribityllumazine synthase (171 aa).

5-amino-6-(D-ribitylamino)uracil-binding positions include Phe24, 58-60, and 82-84; these read ALE and AVI. Residue 87 to 88 participates in (2S)-2-hydroxy-3-oxobutyl phosphate binding; it reads ET. The active-site Proton donor is His90. Residue Asn115 coordinates 5-amino-6-(D-ribitylamino)uracil. Residue Arg129 participates in (2S)-2-hydroxy-3-oxobutyl phosphate binding. The disordered stretch occupies residues 150 to 171; that stretch reads ALDQLGDDEDEEEDEEDEEERA. Residues 154–171 show a composition bias toward acidic residues; sequence LGDDEDEEEDEEDEEERA.

This sequence belongs to the DMRL synthase family.

It catalyses the reaction (2S)-2-hydroxy-3-oxobutyl phosphate + 5-amino-6-(D-ribitylamino)uracil = 6,7-dimethyl-8-(1-D-ribityl)lumazine + phosphate + 2 H2O + H(+). It functions in the pathway cofactor biosynthesis; riboflavin biosynthesis; riboflavin from 2-hydroxy-3-oxobutyl phosphate and 5-amino-6-(D-ribitylamino)uracil: step 1/2. Its function is as follows. Catalyzes the formation of 6,7-dimethyl-8-ribityllumazine by condensation of 5-amino-6-(D-ribitylamino)uracil with 3,4-dihydroxy-2-butanone 4-phosphate. This is the penultimate step in the biosynthesis of riboflavin. The chain is 6,7-dimethyl-8-ribityllumazine synthase from Burkholderia ambifaria (strain ATCC BAA-244 / DSM 16087 / CCUG 44356 / LMG 19182 / AMMD) (Burkholderia cepacia (strain AMMD)).